A 187-amino-acid polypeptide reads, in one-letter code: Ribosome-recycling factor (187 aa).

Belongs to the RRF family.

The protein localises to the cytoplasm. Responsible for the release of ribosomes from messenger RNA at the termination of protein biosynthesis. May increase the efficiency of translation by recycling ribosomes from one round of translation to another. This chain is Ribosome-recycling factor, found in Ligilactobacillus salivarius (strain UCC118) (Lactobacillus salivarius).